Consider the following 481-residue polypeptide: Tetratricopeptide repeat protein 29 (481 aa).

A compositionally biased stretch (low complexity) spans 1-18 (MASVGPVKTKTVTLKELT). The tract at residues 1-53 (MASVGPVKTKTVTLKELTPPIPSPEKSACKGAKPDSNHMALVPVKPSQPGSGK) is disordered. TPR repeat units lie at residues 191–224 (CERC…AMES), 231–264 (QEVR…AMAL), 271–310 (VEAN…SQRV), 317–350 (ADSL…ARAA), 357–390 (KRAS…SEKA), and 397–430 (YRAT…ARKL).

As to quaternary structure, interacts with TAX-1.

It localises to the cytoplasm. The protein localises to the cytoskeleton. Its subcellular location is the flagellum axoneme. Its function is as follows. Axonemal protein which is implicated in axonemal and/or peri-axonemal structure assembly and regulates flagellum assembly and beating. In Trypanosoma brucei brucei (strain 927/4 GUTat10.1), this protein is Tetratricopeptide repeat protein 29.